Here is a 179-residue protein sequence, read N- to C-terminus: Large ribosomal subunit protein uL6 (179 aa).

Belongs to the universal ribosomal protein uL6 family. Part of the 50S ribosomal subunit.

Its function is as follows. This protein binds to the 23S rRNA, and is important in its secondary structure. It is located near the subunit interface in the base of the L7/L12 stalk, and near the tRNA binding site of the peptidyltransferase center. In Leptospira borgpetersenii serovar Hardjo-bovis (strain JB197), this protein is Large ribosomal subunit protein uL6.